The chain runs to 341 residues: Phenylalanine--tRNA ligase alpha subunit (341 aa).

Residue glutamate 256 coordinates Mg(2+).

This sequence belongs to the class-II aminoacyl-tRNA synthetase family. Phe-tRNA synthetase alpha subunit type 1 subfamily. In terms of assembly, tetramer of two alpha and two beta subunits. It depends on Mg(2+) as a cofactor.

The protein localises to the cytoplasm. It catalyses the reaction tRNA(Phe) + L-phenylalanine + ATP = L-phenylalanyl-tRNA(Phe) + AMP + diphosphate + H(+). The protein is Phenylalanine--tRNA ligase alpha subunit of Leptospira interrogans serogroup Icterohaemorrhagiae serovar Lai (strain 56601).